The primary structure comprises 267 residues: Shikimate dehydrogenase (NADP(+)) (267 aa).

Shikimate contacts are provided by residues Ser14 to Ser16 and Thr61. The active-site Proton acceptor is Lys65. Shikimate is bound by residues Asn86 and Asp101. NADP(+) contacts are provided by residues Gly126–Ala130, Asn150–Lys155, and Leu213. Position 215 (Tyr215) interacts with shikimate. Gly236 contributes to the NADP(+) binding site.

Belongs to the shikimate dehydrogenase family. In terms of assembly, homodimer.

It catalyses the reaction shikimate + NADP(+) = 3-dehydroshikimate + NADPH + H(+). It functions in the pathway metabolic intermediate biosynthesis; chorismate biosynthesis; chorismate from D-erythrose 4-phosphate and phosphoenolpyruvate: step 4/7. Involved in the biosynthesis of the chorismate, which leads to the biosynthesis of aromatic amino acids. Catalyzes the reversible NADPH linked reduction of 3-dehydroshikimate (DHSA) to yield shikimate (SA). The chain is Shikimate dehydrogenase (NADP(+)) from Ruthia magnifica subsp. Calyptogena magnifica.